Consider the following 351-residue polypeptide: MENNNSLTIIKKADPKTKSNGEAFQIAFDSMDKIKTMLTQQNDKEKLVLKKLMIEMSINNSLLNELLTSFSTRVNIIDVEIIVLESQISTIERLTLENKKEIQSNDQEKIKEISSMIDKLIDPLLKNIDGLTNKFTEKNVNDEELKKKIDVFFENSKKLFQGIDKAEKSQFLTKFSSLFGVISGFLGIGSVTAIGATEAVGVTSLIAVGATSLSVVAPICAPVLLTFGCLVGAFISFYKQSVARDKKLKTLKSLLSYYMENIELISQVTDETTKLIYHELKEKVLEFKKLEANLKIDFDLSPIKDQFKSITSKQNLIKDKVEEIANYQLDLIQECQKLKKKSLKNKTINKK.

2 N-linked (GlcNAc...) asparagine glycosylation sites follow: Asn4 and Asn59. 2 helical membrane-spanning segments follow: residues 175–195 (FSSL…TAIG) and 215–235 (VVAP…GAFI). Asn345 carries an N-linked (GlcNAc...) asparagine glycan.

The protein resides in the membrane. The chain is Transmembrane protein DDB_G0272716 from Dictyostelium discoideum (Social amoeba).